We begin with the raw amino-acid sequence, 381 residues long: Homoserine O-succinyltransferase (381 aa).

The AB hydrolase-1 domain maps to 53-361 (ILICHALSGS…DSVHGHDAFL (309 aa)). Serine 157 serves as the catalytic Nucleophile. Arginine 227 contacts substrate. Catalysis depends on residues aspartate 324 and histidine 357. Aspartate 358 lines the substrate pocket.

Belongs to the AB hydrolase superfamily. MetX family. As to quaternary structure, homodimer.

The protein localises to the cytoplasm. It carries out the reaction L-homoserine + succinyl-CoA = O-succinyl-L-homoserine + CoA. It participates in amino-acid biosynthesis; L-methionine biosynthesis via de novo pathway; O-succinyl-L-homoserine from L-homoserine: step 1/1. In terms of biological role, transfers a succinyl group from succinyl-CoA to L-homoserine, forming succinyl-L-homoserine. This chain is Homoserine O-succinyltransferase, found in Saccharophagus degradans (strain 2-40 / ATCC 43961 / DSM 17024).